We begin with the raw amino-acid sequence, 889 residues long: DNA mismatch repair protein MutS (889 aa).

Residue 620 to 627 coordinates ATP; it reads GPNMAGKS. The segment at 812-831 is disordered; sequence AAAPSGAARRGRPAREKEPG.

This sequence belongs to the DNA mismatch repair MutS family.

This protein is involved in the repair of mismatches in DNA. It is possible that it carries out the mismatch recognition step. This protein has a weak ATPase activity. The polypeptide is DNA mismatch repair protein MutS (Syntrophobacter fumaroxidans (strain DSM 10017 / MPOB)).